We begin with the raw amino-acid sequence, 193 residues long: Superoxide dismutase [Fe] (193 aa).

Fe cation-binding residues include H27, H74, D157, and H161.

Belongs to the iron/manganese superoxide dismutase family. Homodimer. It depends on Fe cation as a cofactor.

It carries out the reaction 2 superoxide + 2 H(+) = H2O2 + O2. Functionally, destroys superoxide anion radicals which are normally produced within the cells and which are toxic to biological systems. Partially complements double sodA-sodB deletions in E.coli. The polypeptide is Superoxide dismutase [Fe] (Pseudomonas aeruginosa (strain ATCC 15692 / DSM 22644 / CIP 104116 / JCM 14847 / LMG 12228 / 1C / PRS 101 / PAO1)).